Consider the following 858-residue polypeptide: Coiled-coil and C2 domain-containing protein 1B (858 aa).

Disordered stretches follow at residues 112–164 (VLGV…GASQ), 180–199 (AAASAKEAGEAAKARRCERG), 204–284 (ESQL…ALLS), 329–352 (VDLSAMPPAPEDLKPQQASQAPTA), and 470–533 (EKLA…SPSV). The span at 114–143 (GVDEETEPLDGDEVADPGGSEEENGLEDTE) shows a compositional bias: acidic residues. Low complexity predominate over residues 153 to 164 (ASAPAAQAGASQ). Residues 166–212 (LHALLEERIHNYREAAASAKEAGEAAKARRCERGLKTLESQLASVRR) are a coiled coil. Basic and acidic residues predominate over residues 186–199 (EAGEAAKARRCERG). Phosphoserine is present on S209. The segment covering 520 to 532 (PRASSSKESPSPS) has biased composition (low complexity). At S593 the chain carries Phosphoserine. At T596 the chain carries Phosphothreonine. Residues 611–635 (RLSQKAEEVYAQLQKMLLEQQEKCL) adopt a coiled-coil conformation. The C2 domain occupies 676-815 (DPPTHHFELK…ENECEIREIV (140 aa)).

This sequence belongs to the CC2D1 family. As to quaternary structure, interacts with CHMP4B. Widely distributed in brain and peripheral tissues.

It localises to the nucleus. Functionally, transcription factor that binds specifically to the DRE (dual repressor element) and represses HTR1A gene transcription in neuronal cells. This chain is Coiled-coil and C2 domain-containing protein 1B (CC2D1B), found in Homo sapiens (Human).